Reading from the N-terminus, the 492-residue chain is Serine incorporator 4 (492 aa).

Helical transmembrane passes span 58-78 (FYIL…SKTV), 113-133 (AVYR…VLLV), 148-168 (SFWS…FCIP), 179-199 (IGIC…TAFA), 217-237 (FLGV…GAVL), 254-274 (LLSL…APCI), 281-301 (SGLL…FSAL), 330-350 (IPDA…VLFA), 421-441 (GFHF…TNWF), and 464-484 (VASC…PLLA).

The protein belongs to the TDE1 family.

It localises to the membrane. Incorporates a polar amino acid serine into membranes and facilitates the synthesis of two serine-derived lipids, phosphatidylserine and sphingolipids. This chain is Serine incorporator 4 (Serinc4), found in Rattus norvegicus (Rat).